The sequence spans 167 residues: RNA pyrophosphohydrolase (167 aa).

Residues 8 to 159 form the Nudix hydrolase domain; the sequence is PYRTCVGVML…KRPVYERVVK (152 aa). The Nudix box motif lies at 47 to 68; sequence GGVDPGEDTWAAAKRELYEETS.

Belongs to the Nudix hydrolase family. RppH subfamily. A divalent metal cation is required as a cofactor.

Accelerates the degradation of transcripts by removing pyrophosphate from the 5'-end of triphosphorylated RNA, leading to a more labile monophosphorylated state that can stimulate subsequent ribonuclease cleavage. This chain is RNA pyrophosphohydrolase, found in Bradyrhizobium diazoefficiens (strain JCM 10833 / BCRC 13528 / IAM 13628 / NBRC 14792 / USDA 110).